Here is a 1100-residue protein sequence, read N- to C-terminus: Isoleucine--tRNA ligase (1100 aa).

Positions 48–58 (PFATGLPHFGH) match the 'HIGH' region motif. A 'KMSKS' region motif is present at residues 626–630 (KMSKS). Lys-629 is an ATP binding site.

It belongs to the class-I aminoacyl-tRNA synthetase family. IleS type 2 subfamily. As to quaternary structure, monomer. Zn(2+) serves as cofactor.

The protein resides in the cytoplasm. The enzyme catalyses tRNA(Ile) + L-isoleucine + ATP = L-isoleucyl-tRNA(Ile) + AMP + diphosphate. Functionally, catalyzes the attachment of isoleucine to tRNA(Ile). As IleRS can inadvertently accommodate and process structurally similar amino acids such as valine, to avoid such errors it has two additional distinct tRNA(Ile)-dependent editing activities. One activity is designated as 'pretransfer' editing and involves the hydrolysis of activated Val-AMP. The other activity is designated 'posttransfer' editing and involves deacylation of mischarged Val-tRNA(Ile). This Treponema denticola (strain ATCC 35405 / DSM 14222 / CIP 103919 / JCM 8153 / KCTC 15104) protein is Isoleucine--tRNA ligase.